Here is a 541-residue protein sequence, read N- to C-terminus: Putative ammonium transporter sll0537 (541 aa).

11 helical membrane-spanning segments follow: residues 6–26, 44–64, 86–106, 117–137, 161–181, 203–223, 235–255, 260–280, 283–303, 316–336, and 356–376; these read TLWLLLCAGLVFFMQAGFMCL, FADFGISVALFWSFGFSIMFG, LAVFFLFQAMFCGTATTIISG, YLLVAGLASGLIYPLFGDWAW, FAGSTVVHSVGAWIGLATILV, MPFSVLGTLILWFGWLGFNGG, IMVNTVLAGVGGMLMAGLISL, MIQVEPLMNGSLAGLVAITAS, VVMTPIAMVIGATGSAIAYLV, VDAVAVHGGAGVWGTLCVGLF, and LLGIGVCTLWAFGLAWVFLTL.

This sequence belongs to the ammonia transporter channel (TC 1.A.11.2) family.

It localises to the cell membrane. In Synechocystis sp. (strain ATCC 27184 / PCC 6803 / Kazusa), this protein is Putative ammonium transporter sll0537.